Here is a 574-residue protein sequence, read N- to C-terminus: MRASRYLIATLKETPADAEVISHQLMLRAGMIRKLAAGLYTWLPLGLRVLKKVENIVREEMDRSGAQEVLMPAVQPAELWIESGRWEQYGGELLRIHDRHNRDFCVGPTHEEVITDLIRNELKSYKQLPANFYQIQMKFRDERRPRFGIMRAREFLMKDAYSFHVNQESLDETYMVMYDAYTRIFTRFGLDFRPVQADSGSIGGSSSHEFHVLANSGEDLIAFSTESDYAANLEKAEALTTLKQAPAPSKDMAKVATPGQRTIESVSEFLNLPAEQTVKTLLVLGEAEEGKPAPIIALVLRGDHVLNEIKAEKLPGVASPLTFASDEAIEAAVGCKPGSIGPVNLPLRTIVDNSAAVLANFVCGANEEGQHLTGVNWGRDCEIKETADLRNVVEGDLSPDGKGVLVLKKGIEVGHVFKLGDKYSSAMNATVLDENGKATVMQMGCYGIGVSRVVAAAIEQGHDDKGIIWPDALAPFEVALVPLNMHKSDVVREKAESLYAELLQAGVDVLLDDRNERPGVKFAEMELIGIPHRVVISDRGLAEGKVEYKGRRDTDSTDMTVDTVVNFIKEKLKK.

The protein belongs to the class-II aminoacyl-tRNA synthetase family. ProS type 1 subfamily. Homodimer.

It localises to the cytoplasm. The catalysed reaction is tRNA(Pro) + L-proline + ATP = L-prolyl-tRNA(Pro) + AMP + diphosphate. Catalyzes the attachment of proline to tRNA(Pro) in a two-step reaction: proline is first activated by ATP to form Pro-AMP and then transferred to the acceptor end of tRNA(Pro). As ProRS can inadvertently accommodate and process non-cognate amino acids such as alanine and cysteine, to avoid such errors it has two additional distinct editing activities against alanine. One activity is designated as 'pretransfer' editing and involves the tRNA(Pro)-independent hydrolysis of activated Ala-AMP. The other activity is designated 'posttransfer' editing and involves deacylation of mischarged Ala-tRNA(Pro). The misacylated Cys-tRNA(Pro) is not edited by ProRS. The polypeptide is Proline--tRNA ligase (Hahella chejuensis (strain KCTC 2396)).